We begin with the raw amino-acid sequence, 309 residues long: NmrA-like family domain-containing protein 1 (309 aa).

Residues 11 to 16, 37 to 41, 58 to 59, 79 to 81, K102, K143, and 165 to 168 each bind NADP(+); these read GATGAQ, RNPEQ, DQ, TNY, and YFEN. The segment at 163–199 is interaction with ASS1; the sequence is PCYFENLLSYFLPQKAADGKSFLLDLPMGDVPMDGMS.

This sequence belongs to the NmrA-type oxidoreductase family. Homodimer. Interacts with ASS1. Interaction is enhanced by low NADPH/NADP(+) ratios, which results in inhibition of ASS1 activity.

The protein resides in the cytoplasm. Its subcellular location is the perinuclear region. The protein localises to the nucleus. In terms of biological role, redox sensor protein. Undergoes restructuring and subcellular redistribution in response to changes in intracellular NADPH/NADP(+) levels. At low NADPH concentrations the protein is found mainly as a monomer, and binds argininosuccinate synthase (ASS1), the enzyme involved in nitric oxide synthesis. Association with ASS1 impairs its activity and reduces the production of nitric oxide, which subsecuently prevents apoptosis. Under normal NADPH concentrations, the protein is found as a dimer and hides the binding site for ASS1. The homodimer binds one molecule of NADPH. Has higher affinity for NADPH than for NADP(+). Binding to NADPH is necessary to form a stable dimer. This Mus musculus (Mouse) protein is NmrA-like family domain-containing protein 1 (Nmral1).